Here is a 277-residue protein sequence, read N- to C-terminus: Undecaprenyl-diphosphatase 1 (277 aa).

8 helical membrane passes run 1-21, 39-58, 85-105, 113-133, 147-167, 191-211, 226-246, and 251-271; these read MSLL…FLPI, AGFS…VILY, FWFA…GILF, FKAP…LIII, MTIW…IPGL, SFLL…DDLI, ASFV…LNLV, and LVYF…FQDA.

It belongs to the UppP family.

The protein resides in the cell membrane. The catalysed reaction is di-trans,octa-cis-undecaprenyl diphosphate + H2O = di-trans,octa-cis-undecaprenyl phosphate + phosphate + H(+). Its function is as follows. Catalyzes the dephosphorylation of undecaprenyl diphosphate (UPP). Confers resistance to bacitracin. In Shouchella clausii (strain KSM-K16) (Alkalihalobacillus clausii), this protein is Undecaprenyl-diphosphatase 1.